A 100-amino-acid polypeptide reads, in one-letter code: Proline-rich protein 15-like protein (100 aa).

The interval 29 to 51 (YAQTEGGAEPPGPDAGDPHSDFN) is disordered.

This sequence belongs to the PRR15 family.

The chain is Proline-rich protein 15-like protein (Prr15l) from Mus musculus (Mouse).